The following is a 283-amino-acid chain: Phosphatidylglycerol--prolipoprotein diacylglyceryl transferase (283 aa).

7 helical membrane passes run 18–38, 59–79, 91–111, 124–144, 185–205, 213–233, and 251–271; these read LFGHPIVWYGLLFALGLIILG, LAVYVFVGTIVGARLGHVLFY, IFVTWEGGLASHGGTIGIIIA, ILWVLDRLAVPTGIVAAMIRL, TQIYEALCYLAVFALCMWLYW, YSGLIVGVFLTGIFLSRFIIE, and GLNMGQLLSIPFVLAGIWLII. Arginine 143 provides a ligand contact to a 1,2-diacyl-sn-glycero-3-phospho-(1'-sn-glycerol).

It belongs to the Lgt family.

Its subcellular location is the cell inner membrane. The enzyme catalyses L-cysteinyl-[prolipoprotein] + a 1,2-diacyl-sn-glycero-3-phospho-(1'-sn-glycerol) = an S-1,2-diacyl-sn-glyceryl-L-cysteinyl-[prolipoprotein] + sn-glycerol 1-phosphate + H(+). The protein operates within protein modification; lipoprotein biosynthesis (diacylglyceryl transfer). In terms of biological role, catalyzes the transfer of the diacylglyceryl group from phosphatidylglycerol to the sulfhydryl group of the N-terminal cysteine of a prolipoprotein, the first step in the formation of mature lipoproteins. The chain is Phosphatidylglycerol--prolipoprotein diacylglyceryl transferase from Porphyromonas gingivalis (strain ATCC 33277 / DSM 20709 / CIP 103683 / JCM 12257 / NCTC 11834 / 2561).